We begin with the raw amino-acid sequence, 1863 residues long: Calcineurin-binding protein 1 (1863 aa).

TPR repeat units lie at residues 30-65 (LSQTYHDGLLKLQAKDYDKARELLESILKDPIITNS), 81-116 (FLALKNLATVFLELGSSHYENALNCYLQAIDLDAKD), and 118-150 (VLWNHLGTLSCSMGLLSISRWAFEQGLLCSPNN). Positions 315–361 (ERESGGSVKEKEPVFSEEHPQERRSTRLERLRNQKPEKEGLEFDNSK) are disordered. TPR repeat units lie at residues 543-576 (ARYFWLSARLSILEDNKAKALEEYLRCLSLLGRE), 602-637 (IHEINLLKIDFLLENNIPEMMEKEFYSECVNLLAPL), 866-900 (INSPDGLGHDMGLPDKLCRNEVKSFLEEVHVEKNE), 955-988 (QCFFCLYGLNLRVDGSYEDELAVHKNTSRGDYQT), 990-1009 (EQCVDVFQYILPYAKASSRT), 1011-1031 (LVKLRRVLRAIKKHFSQPPDD), 1143-1183 (FESW…SQRV), 1226-1263 (VPFYDQRSVLPSKDATWTRFCENSMKHFNKAFSHRQDW), 1264-1297 (SHAFYMGKLSEKLGHSYEISLSYYKQAMTLNPSA), 1306-1339 (ASRLKLLNACGKQNLEALKVLASYCFDESIKDTA), 1377-1412 (EGVWHMLYNDSLSALGICVEGDLKHFHKARYMLAQG), and 1508-1541 (NSLRSDKRFSLCVEDLVPVAIGRYVKALVSSMSR). Positions 894 to 923 (VHVEKNENNKTESKKDGSEEQVGYREKEQS) are enriched in basic and acidic residues. The tract at residues 894–941 (VHVEKNENNKTESKKDGSEEQVGYREKEQSEQQSKQIPEHTEEVAEEE) is disordered. Positions 1813–1840 (KMKRGASTSSVVPSVQSGGTSEPEPAPK) are disordered. Polar residues predominate over residues 1818-1832 (ASTSSVVPSVQSGGT).

Component of the HIRA complex made of UBN1, UBN2, ASF1A, CABIN1 and HIRA. In terms of tissue distribution, expressed at low levels in seedlings.

Its subcellular location is the nucleus. May be required for replication-independent chromatin assembly. This chain is Calcineurin-binding protein 1, found in Arabidopsis thaliana (Mouse-ear cress).